Consider the following 197-residue polypeptide: uncharacterized protein (197 aa).

Belongs to the NAD(P)H dehydrogenase (quinone) family.

This is an uncharacterized protein from Bacillus subtilis (strain 168).